We begin with the raw amino-acid sequence, 2193 residues long: Genome polyprotein (2193 aa).

Residue G2 is the site of N-myristoyl glycine; by host attachment. The Cytoplasmic portion of the chain corresponds to G2–Q1503. Residues E567–V583 are amphipathic alpha-helix. Residues H880 and D898 each act as for protease 2A activity in the active site. Residues C915 and C917 each contribute to the Zn(2+) site. Residue C969 is the For protease 2A activity of the active site. Zn(2+) is bound by residues C975 and H977. A membrane-binding region spans residues N1109 to Q1181. The segment at N1109–T1247 is oligomerization. The tract at residues A1130–Q1134 is RNA-binding. In terms of domain architecture, SF3 helicase spans E1213–N1369. 3 residues coordinate Zn(2+): C1377, C1389, and C1394. The C4-type; degenerate zinc finger occupies C1377 to C1394. Residues E1421–V1428 form an RNA-binding region. An oligomerization region spans residues L1432–Q1437. An intramembrane segment occupies A1504–Y1519. Topologically, residues K1520–F2193 are cytoplasmic. Position 1529 is an O-(5'-phospho-RNA)-tyrosine (Y1529). The Peptidase C3 domain maps to G1549–F1727. Catalysis depends on for protease 3C activity residues H1588, E1619, and C1695. Residues G1958 to L2074 form the RdRp catalytic domain. Mg(2+)-binding residues include D1964 and D2060.

The protein belongs to the picornaviruses polyprotein family. Interacts with capsid protein VP1 and capsid protein VP3 to form heterotrimeric protomers. As to quaternary structure, interacts with capsid protein VP0, and capsid protein VP3 to form heterotrimeric protomers. Five protomers subsequently associate to form pentamers which serve as building blocks for the capsid. Interacts with capsid protein VP2, capsid protein VP3 and capsid protein VP4 following cleavage of capsid protein VP0. In terms of assembly, interacts with capsid protein VP1 and capsid protein VP3 in the mature capsid. Interacts with capsid protein VP0 and capsid protein VP1 to form heterotrimeric protomers. Five protomers subsequently associate to form pentamers which serve as building blocks for the capsid. Interacts with capsid protein VP4 in the mature capsid. Interacts with protein 2C; this interaction may be important for virion morphogenesis. As to quaternary structure, interacts with capsid protein VP1 and capsid protein VP3. In terms of assembly, homodimer. Homohexamer; forms a hexameric ring structure with 6-fold symmetry characteristic of AAA+ ATPases. Interacts (via N-terminus) with host RTN3 (via reticulon domain); this interaction is important for viral replication. Interacts with capsid protein VP3; this interaction may be important for virion morphogenesis. As to quaternary structure, interacts with protein 3CD. In terms of assembly, homodimer. Interacts with host GBF1. Interacts (via GOLD domain) with host ACBD3 (via GOLD domain); this interaction allows the formation of a viral protein 3A/ACBD3 heterotetramer with a 2:2 stoichiometry, which will stimulate the recruitment of host PI4KB in order to synthesize PI4P at the viral RNA replication sites. Interacts with RNA-directed RNA polymerase. As to quaternary structure, interacts with protein 3AB and with RNA-directed RNA polymerase. In terms of assembly, interacts with Viral protein genome-linked and with protein 3CD. It depends on Mg(2+) as a cofactor. Post-translationally, specific enzymatic cleavages in vivo by the viral proteases yield processing intermediates and the mature proteins. In terms of processing, myristoylation is required for the formation of pentamers during virus assembly. Further assembly of 12 pentamers and a molecule of genomic RNA generates the provirion. During virion maturation, immature virions are rendered infectious following cleavage of VP0 into VP4 and VP2. This maturation seems to be an autocatalytic event triggered by the presence of RNA in the capsid and it is followed by a conformational change infectious virion. Post-translationally, myristoylation is required during RNA encapsidation and formation of the mature virus particle. In terms of processing, VPg is uridylylated by the polymerase into VPg-pUpU. This acts as a nucleotide-peptide primer for the genomic RNA replication.

Its subcellular location is the virion. It is found in the host cytoplasm. The protein localises to the host cytoplasmic vesicle membrane. The protein resides in the host nucleus. It carries out the reaction a ribonucleoside 5'-triphosphate + H2O = a ribonucleoside 5'-diphosphate + phosphate + H(+). The enzyme catalyses Selective cleavage of Tyr-|-Gly bond in the picornavirus polyprotein.. The catalysed reaction is RNA(n) + a ribonucleoside 5'-triphosphate = RNA(n+1) + diphosphate. It catalyses the reaction Selective cleavage of Gln-|-Gly bond in the poliovirus polyprotein. In other picornavirus reactions Glu may be substituted for Gln, and Ser or Thr for Gly.. With respect to regulation, replication or transcription is subject to high level of random mutations by the nucleotide analog ribavirin. Forms an icosahedral capsid of pseudo T=3 symmetry with capsid proteins VP2 and VP3. The capsid is 300 Angstroms in diameter, composed of 60 copies of each capsid protein and enclosing the viral positive strand RNA genome. Capsid protein VP1 mainly forms the vertices of the capsid. Capsid protein VP1 interacts with host cell receptor to provide virion attachment to target host cells. This attachment induces virion internalization. Tyrosine kinases are probably involved in the entry process. After binding to its receptor, the capsid undergoes conformational changes. Capsid protein VP1 N-terminus (that contains an amphipathic alpha-helix) and capsid protein VP4 are externalized. Together, they shape a pore in the host membrane through which viral genome is translocated to host cell cytoplasm. Functionally, forms an icosahedral capsid of pseudo T=3 symmetry with capsid proteins VP2 and VP3. The capsid is 300 Angstroms in diameter, composed of 60 copies of each capsid protein and enclosing the viral positive strand RNA genome. Its function is as follows. Lies on the inner surface of the capsid shell. After binding to the host receptor, the capsid undergoes conformational changes. Capsid protein VP4 is released, Capsid protein VP1 N-terminus is externalized, and together, they shape a pore in the host membrane through which the viral genome is translocated into the host cell cytoplasm. In terms of biological role, component of immature procapsids, which is cleaved into capsid proteins VP4 and VP2 after maturation. Allows the capsid to remain inactive before the maturation step. Cysteine protease that cleaves viral polyprotein and specific host proteins. It is responsible for the autocatalytic cleavage between the P1 and P2 regions, which is the first cleavage occurring in the polyprotein. Also cleaves the host translation initiation factor EIF4G1, in order to shut down the capped cellular mRNA translation. Inhibits the host nucleus-cytoplasm protein and RNA trafficking by cleaving host members of the nuclear pores. Counteracts stress granule formation probably by antagonizing its assembly or promoting its dissassembly. Functionally, plays an essential role in the virus replication cycle by acting as a viroporin. Creates a pore in the host endoplasmic reticulum and as a consequence releases Ca2+ in the cytoplasm of infected cell. In turn, high levels of cytoplasmic calcium may trigger membrane trafficking and transport of viral ER-associated proteins to viroplasms, sites of viral genome replication. Its function is as follows. Induces and associates with structural rearrangements of intracellular membranes. Displays RNA-binding, nucleotide binding and NTPase activities. May play a role in virion morphogenesis and viral RNA encapsidation by interacting with the capsid protein VP3. In terms of biological role, localizes the viral replication complex to the surface of membranous vesicles. Together with protein 3CD binds the Cis-Active RNA Element (CRE) which is involved in RNA synthesis initiation. Acts as a cofactor to stimulate the activity of 3D polymerase, maybe through a nucleid acid chaperone activity. Localizes the viral replication complex to the surface of membranous vesicles. It inhibits host cell endoplasmic reticulum-to-Golgi apparatus transport and causes the disassembly of the Golgi complex, possibly through GBF1 interaction. This would result in depletion of MHC, trail receptors and IFN receptors at the host cell surface. Plays an essential role in viral RNA replication by recruiting ACBD3 and PI4KB at the viral replication sites, thereby allowing the formation of the rearranged membranous structures where viral replication takes place. Functionally, acts as a primer for viral RNA replication and remains covalently bound to viral genomic RNA. VPg is uridylylated prior to priming replication into VPg-pUpU. The oriI viral genomic sequence may act as a template for this. The VPg-pUpU is then used as primer on the genomic RNA poly(A) by the RNA-dependent RNA polymerase to replicate the viral genome. During genome replication, the VPg-RNA linkage is removed by the host TDP2, thereby accelerating replication. During the late stage of the replication cycle, host TDP2 is excluded from sites of viral RNA synthesis and encapsidation, allowing for the generation of progeny virions. Its function is as follows. Involved in the viral replication complex and viral polypeptide maturation. It exhibits protease activity with a specificity and catalytic efficiency that is different from protease 3C. Protein 3CD lacks polymerase activity. Protein 3CD binds to the 5'UTR of the viral genome. In terms of biological role, replicates the viral genomic RNA on the surface of intracellular membranes. May form linear arrays of subunits that propagate along a strong head-to-tail interaction called interface-I. Covalently attaches UMP to a tyrosine of VPg, which is used to prime RNA synthesis. The positive stranded RNA genome is first replicated at virus induced membranous vesicles, creating a dsRNA genomic replication form. This dsRNA is then used as template to synthesize positive stranded RNA genomes. ss(+)RNA genomes are either translated, replicated or encapsidated. Major viral protease that mediates proteolytic processing of the polyprotein. Cleaves host EIF5B, contributing to host translation shutoff. Also cleaves host PABPC1, contributing to host translation shutoff. Cleaves host NLRP1, triggers host N-glycine-mediated degradation of the autoinhibitory NLRP1 N-terminal fragment. The polypeptide is Genome polyprotein (Echovirus 9 (strain Hill)).